We begin with the raw amino-acid sequence, 459 residues long: FAD-dependent monooxygenase nanF (459 aa).

The FAD site is built by Glu49, Gly62, and Arg121. Residues Arg200 and Tyr230 contribute to the active site. FAD-binding residues include Asp327 and Gly340.

This sequence belongs to the paxM FAD-dependent monooxygenase family. The cofactor is FAD.

Its pathway is secondary metabolite biosynthesis. FAD-dependent monooxygenase; part of the gene cluster that mediates the biosynthesis of the benzazepine alkaloid nanangelenin A which contains an unprecedented 3,4-dihydro-1-benzazepine-2,5-dione-N-prenyl-N-acetoxy-anthranilamide scaffold. The first step of nanangelenin biosynthesis is catalyzed by the indoleamine 2,3-dioxygenase nanC which produces N-formyl-kynurenine through the catabolism of tryptophan. The two-module NRPS nanA then utilizes anthranilate (Ant) and L-kynurenine (L-Kyn) to assemble the dipeptide product nanangelenin B. The first adenylation domain of nanA (A1) loads anthranilate onto the T1 domain, while A2 loads kynurenine, generated through spontaneous nonenzymatic deformylation of the nanC-supplied N-formyl-kynurenine. The peptide bond formation between the tethered amino acids is catalyzed by the first condensation domain (C1) between anthranilate's carbonyl carbon and kynurenine's aliphatic primary amine. The second C domain (C2) catalyzes the final cyclization event between the aromatic amine of kynurenine and the tethered carbonyl carbon, yielding nanangelenin B. The terminal T3 domain enhances the catalytic efficiency of C2, suggesting the T2-tethered Ant-L-Kyn is transferred to T3 prior to cyclization by C2. Once released from nanA, nanangelenin B is then prenylated by the prenyltransferase nanD to form nanangelenin C. Nanangelenin C is then N-hydroxylated by the FAD-dependent monooxygenase nanF and further acetylated by the acetyltransferase nanB to yield nanangelenin F. Finally, the N-methyltransferase nanE methylates the amide nitrogen of 1-benzazepine to convert nanangelenin F into nanangelenin A. NanE is also able to methylate most of the intermediates of the pathway such as nanangelenin B and nanangelenin C to produce nanangelenin D and nanangelenin E, respectively. The protein is FAD-dependent monooxygenase nanF of Aspergillus nanangensis.